The chain runs to 462 residues: Chromosomal replication initiator protein DnaA (462 aa).

Residues Met-1–Ala-84 form a domain I, interacts with DnaA modulators region. Residues Ala-84 to Ser-125 are domain II. Residues Asn-126–Ala-342 form a domain III, AAA+ region region. The ATP site is built by Gly-170, Gly-172, Lys-173, and Thr-174. A domain IV, binds dsDNA region spans residues Asn-343–Ser-462.

Belongs to the DnaA family. Oligomerizes as a right-handed, spiral filament on DNA at oriC.

It localises to the cytoplasm. Its function is as follows. Plays an essential role in the initiation and regulation of chromosomal replication. ATP-DnaA binds to the origin of replication (oriC) to initiate formation of the DNA replication initiation complex once per cell cycle. Binds the DnaA box (a 9 base pair repeat at the origin) and separates the double-stranded (ds)DNA. Forms a right-handed helical filament on oriC DNA; dsDNA binds to the exterior of the filament while single-stranded (ss)DNA is stabiized in the filament's interior. The ATP-DnaA-oriC complex binds and stabilizes one strand of the AT-rich DNA unwinding element (DUE), permitting loading of DNA polymerase. After initiation quickly degrades to an ADP-DnaA complex that is not apt for DNA replication. Binds acidic phospholipids. The protein is Chromosomal replication initiator protein DnaA of Shewanella baltica (strain OS195).